A 182-amino-acid chain; its full sequence is CDP-diacylglycerol--glycerol-3-phosphate 3-phosphatidyltransferase (182 aa).

Residues Q2 to F12 lie on the Cytoplasmic side of the membrane. A helical transmembrane segment spans residues R13 to L37. Over I38–T60 the chain is Periplasmic. Residues R61–L81 form a helical membrane-spanning segment. Residues V82–Y86 lie on the Cytoplasmic side of the membrane. A helical membrane pass occupies residues H87–A107. Over L108–P145 the chain is Periplasmic. The chain crosses the membrane as a helical span at residues N146–M168. Residues L169–D181 lie on the Cytoplasmic side of the membrane.

The protein belongs to the CDP-alcohol phosphatidyltransferase class-I family.

It is found in the cell inner membrane. It catalyses the reaction a CDP-1,2-diacyl-sn-glycerol + sn-glycerol 3-phosphate = a 1,2-diacyl-sn-glycero-3-phospho-(1'-sn-glycero-3'-phosphate) + CMP + H(+). The protein operates within phospholipid metabolism; phosphatidylglycerol biosynthesis; phosphatidylglycerol from CDP-diacylglycerol: step 1/2. Functionally, catalyzes the conversion of cytidine diphosphate diacylglycerol (CDP-DG) and glycerol 3-phosphate into phosphatidylglycerol. Essential for the synthesis of anionic phospholipids, thereby playing a role in balancing the ratio of zwitterionic and anionic phospholipids, which is thought to be important for normal membrane function. This chain is CDP-diacylglycerol--glycerol-3-phosphate 3-phosphatidyltransferase, found in Shigella boydii serotype 4 (strain Sb227).